A 499-amino-acid polypeptide reads, in one-letter code: NAD(P)H-quinone oxidoreductase chain 4, chloroplastic (499 aa).

14 helical membrane passes run 4–24 (FPWL…IFFL), 35–55 (YTIY…CYNF), 84–104 (GLSI…TLAA), 111–129 (SRLF…IGSF), 134–154 (LLLF…LLSV), 167–187 (FILY…GIGL), 208–228 (ALEI…LPII), 242–262 (HYST…YGLI), 272–292 (AHSI…IYAA), 305–325 (IAYS…SITD), 330–350 (GAVL…FLAG), 386–406 (LALP…GIIT), 416–436 (IVIT…SLSM), and 462–482 (LFVL…PDFV).

It belongs to the complex I subunit 4 family.

The protein resides in the plastid. It localises to the chloroplast thylakoid membrane. The catalysed reaction is a plastoquinone + NADH + (n+1) H(+)(in) = a plastoquinol + NAD(+) + n H(+)(out). It carries out the reaction a plastoquinone + NADPH + (n+1) H(+)(in) = a plastoquinol + NADP(+) + n H(+)(out). This chain is NAD(P)H-quinone oxidoreductase chain 4, chloroplastic, found in Citrus sinensis (Sweet orange).